We begin with the raw amino-acid sequence, 62 residues long: Photosystem II reaction center protein Z (62 aa).

2 consecutive transmembrane segments (helical) span residues 8 to 28 (AVFA…VVLA) and 41 to 61 (FSGA…NSFI).

The protein belongs to the PsbZ family. As to quaternary structure, PSII is composed of 1 copy each of membrane proteins PsbA, PsbB, PsbC, PsbD, PsbE, PsbF, PsbH, PsbI, PsbJ, PsbK, PsbL, PsbM, PsbT, PsbY, PsbZ, Psb30/Ycf12, at least 3 peripheral proteins of the oxygen-evolving complex and a large number of cofactors. It forms dimeric complexes.

It localises to the plastid. It is found in the chloroplast thylakoid membrane. May control the interaction of photosystem II (PSII) cores with the light-harvesting antenna, regulates electron flow through the 2 photosystem reaction centers. PSII is a light-driven water plastoquinone oxidoreductase, using light energy to abstract electrons from H(2)O, generating a proton gradient subsequently used for ATP formation. The protein is Photosystem II reaction center protein Z of Marchantia polymorpha (Common liverwort).